A 715-amino-acid chain; its full sequence is MIYEGKAITVKALESGIVELKFDLKGESVNKFNRLTLNELRQAVDTIKADASIKGVIVSSGKDVFIVGADITEFVDNFKLPDAELVAGNLEANKIFSDFEDLNVPTVAAINGIALGGGLEMCLAADFRVMSATAKIGLPEVKLGIYPGFGGTVRLPRLIGADNAIEWIAAGKENRAEDALKVGAVDAVVAPDKLAEAALNLIKGAISGEFDYKAKRQPKLEKLKLNAIEQMMSFETAKGFVAGQAGPNYPAPVEAIKTIQKAANFGRDKALEVEAAGFVKLAKTSAAQSLIGLFLNDQELKKKAKAYDEIARDVKQAAVLGAGIMGGGIAYQSASKGTPILMKDINEHGIEQGLAEAAKLLVGRVDKGRMTAAKMAEVLNGIRPTLSYGDFGHVDLVVEAVVENPKVKQAVLAEVEAQVKDDTILASNTSTISISLLAKALKRPENFVGMHFFNPVHMMPLVEVIRGEKSSELAVATTVAYAKKMGKNPIVVNDCPGFLVNRVLFPYFGGFAKLVSAGVDFVRIDKVMEKFGWPMGPAYLMDVVGIDTGHHGRDVMAEGFPDRMKDDRRSAIDALYEAKRLGQKNGKGFYAYEADKKGKQKKVADPSVHEVLAPVIYEQREVSDEDIINWMMIALCLETVRCLEDGIVETAAEADMGLVYGIGFPPFRGGALRYIDSIGVAEFVALADKYADLGPLYHPTAKLREMAKNGQSFFG.

The segment at 1–190 (MIYEGKAITV…KVGAVDAVVA (190 aa)) is enoyl-CoA hydratase/isomerase. Aspartate 297 provides a ligand contact to substrate. The 3-hydroxyacyl-CoA dehydrogenase stretch occupies residues 312–715 (RDVKQAAVLG…MAKNGQSFFG (404 aa)). NAD(+)-binding positions include methionine 325, aspartate 344, 401–403 (VVE), lysine 408, and serine 430. Histidine 451 functions as the For 3-hydroxyacyl-CoA dehydrogenase activity in the catalytic mechanism. Asparagine 454 is an NAD(+) binding site. Residues asparagine 501 and tyrosine 660 each contribute to the substrate site.

The protein in the N-terminal section; belongs to the enoyl-CoA hydratase/isomerase family. In the C-terminal section; belongs to the 3-hydroxyacyl-CoA dehydrogenase family. As to quaternary structure, heterotetramer of two alpha chains (FadB) and two beta chains (FadA).

It carries out the reaction a (3S)-3-hydroxyacyl-CoA + NAD(+) = a 3-oxoacyl-CoA + NADH + H(+). It catalyses the reaction a (3S)-3-hydroxyacyl-CoA = a (2E)-enoyl-CoA + H2O. The enzyme catalyses a 4-saturated-(3S)-3-hydroxyacyl-CoA = a (3E)-enoyl-CoA + H2O. The catalysed reaction is (3S)-3-hydroxybutanoyl-CoA = (3R)-3-hydroxybutanoyl-CoA. It carries out the reaction a (3Z)-enoyl-CoA = a 4-saturated (2E)-enoyl-CoA. It catalyses the reaction a (3E)-enoyl-CoA = a 4-saturated (2E)-enoyl-CoA. Its pathway is lipid metabolism; fatty acid beta-oxidation. Functionally, involved in the aerobic and anaerobic degradation of long-chain fatty acids via beta-oxidation cycle. Catalyzes the formation of 3-oxoacyl-CoA from enoyl-CoA via L-3-hydroxyacyl-CoA. It can also use D-3-hydroxyacyl-CoA and cis-3-enoyl-CoA as substrate. This Pseudomonas fluorescens (strain SBW25) protein is Fatty acid oxidation complex subunit alpha.